A 450-amino-acid polypeptide reads, in one-letter code: Salicylate synthase (450 aa).

Catalysis depends on Glu-252, which acts as the Proton donor. Substrate is bound at residue 270 to 271 (GT). Mg(2+) is bound at residue Glu-297. Substrate-binding positions include Tyr-385, Arg-405, and 419 to 421 (GAG). The Mg(2+) site is built by Glu-431 and Glu-434. Lys-438 contributes to the substrate binding site.

It belongs to the anthranilate synthase component I family. Salicylate synthase subfamily. In terms of assembly, monomer. The cofactor is Mg(2+).

It carries out the reaction chorismate = isochorismate. The enzyme catalyses isochorismate = salicylate + pyruvate. The catalysed reaction is chorismate = prephenate. Its pathway is siderophore biosynthesis; mycobactin biosynthesis. Involved in the incorporation of salicylate into the virulence-conferring salicylate-based siderophore mycobactin. Catalyzes the initial conversion of chorismate to yield the intermediate isochorismate (isochorismate synthase activity), and the subsequent elimination of the enolpyruvyl side chain in a lyase reaction to give salicylate (isochorismate pyruvate-lyase activity). In the absence of magnesium, MbtI displays a chorismate mutase activity and converts chorismate to prephenate. This is Salicylate synthase (mbtI) from Mycolicibacterium paratuberculosis (strain ATCC BAA-968 / K-10) (Mycobacterium paratuberculosis).